We begin with the raw amino-acid sequence, 464 residues long: Siroheme synthase (464 aa).

Residues 1–203 (MDYLPLFHNL…GQETEAERLL (203 aa)) are precorrin-2 dehydrogenase /sirohydrochlorin ferrochelatase. NAD(+)-binding positions include 22 to 23 (EI) and 43 to 44 (PQ). Phosphoserine is present on S128. Residues 216-464 (GEVYLVGAGP…AWFEGRQSAD (249 aa)) form a uroporphyrinogen-III C-methyltransferase region. Residue P225 participates in S-adenosyl-L-methionine binding. The active-site Proton acceptor is the D248. K270 acts as the Proton donor in catalysis. Residues 301-303 (GGD), I306, 331-332 (TA), M383, and G412 contribute to the S-adenosyl-L-methionine site.

It in the N-terminal section; belongs to the precorrin-2 dehydrogenase / sirohydrochlorin ferrochelatase family. This sequence in the C-terminal section; belongs to the precorrin methyltransferase family.

The enzyme catalyses uroporphyrinogen III + 2 S-adenosyl-L-methionine = precorrin-2 + 2 S-adenosyl-L-homocysteine + H(+). It catalyses the reaction precorrin-2 + NAD(+) = sirohydrochlorin + NADH + 2 H(+). The catalysed reaction is siroheme + 2 H(+) = sirohydrochlorin + Fe(2+). The protein operates within cofactor biosynthesis; adenosylcobalamin biosynthesis; precorrin-2 from uroporphyrinogen III: step 1/1. It functions in the pathway cofactor biosynthesis; adenosylcobalamin biosynthesis; sirohydrochlorin from precorrin-2: step 1/1. It participates in porphyrin-containing compound metabolism; siroheme biosynthesis; precorrin-2 from uroporphyrinogen III: step 1/1. Its pathway is porphyrin-containing compound metabolism; siroheme biosynthesis; siroheme from sirohydrochlorin: step 1/1. The protein operates within porphyrin-containing compound metabolism; siroheme biosynthesis; sirohydrochlorin from precorrin-2: step 1/1. Multifunctional enzyme that catalyzes the SAM-dependent methylations of uroporphyrinogen III at position C-2 and C-7 to form precorrin-2 via precorrin-1. Then it catalyzes the NAD-dependent ring dehydrogenation of precorrin-2 to yield sirohydrochlorin. Finally, it catalyzes the ferrochelation of sirohydrochlorin to yield siroheme. This chain is Siroheme synthase, found in Azotobacter vinelandii (strain DJ / ATCC BAA-1303).